The chain runs to 138 residues: Large ribosomal subunit protein uL16 (138 aa).

Residues 1–13 (MLQPARRKYRKEQ) show a composition bias toward basic residues. Residues 1-22 (MLQPARRKYRKEQKGRNTGVAT) are disordered.

It belongs to the universal ribosomal protein uL16 family. As to quaternary structure, part of the 50S ribosomal subunit.

Binds 23S rRNA and is also seen to make contacts with the A and possibly P site tRNAs. This is Large ribosomal subunit protein uL16 from Paracidovorax citrulli (strain AAC00-1) (Acidovorax citrulli).